Reading from the N-terminus, the 397-residue chain is Galactokinase (397 aa).

A disordered region spans residues M1–R27. Positions S9–G18 are enriched in low complexity. E36–D39 contacts substrate. ATP-binding positions include S69 and G124 to S130. Positions 130 and 161 each coordinate Mg(2+). D173 serves as the catalytic Proton acceptor. Y225 lines the substrate pocket.

The protein belongs to the GHMP kinase family. GalK subfamily.

The protein resides in the cytoplasm. It catalyses the reaction alpha-D-galactose + ATP = alpha-D-galactose 1-phosphate + ADP + H(+). Its pathway is carbohydrate metabolism; galactose metabolism. Catalyzes the transfer of the gamma-phosphate of ATP to D-galactose to form alpha-D-galactose-1-phosphate (Gal-1-P). The sequence is that of Galactokinase from Streptomyces lividans.